A 74-amino-acid polypeptide reads, in one-letter code: NADH dehydrogenase [ubiquinone] 1 alpha subcomplex assembly factor 8 (74 aa).

Residues 22–69 (LAACGAEAAAYGRCVQASTAPGGRLSKDFCAREFEALRSCFAAAAKKT) enclose the CHCH domain. 2 short sequence motifs (cx9C motif) span residues 25–35 (CGAEAAAYGRC) and 51–61 (CAREFEALRSC). Intrachain disulfides connect cysteine 25–cysteine 61 and cysteine 35–cysteine 51.

Interacts with NDUFAF5.

The protein localises to the mitochondrion. In terms of biological role, involved in the assembly of mitochondrial NADH:ubiquinone oxidoreductase complex (complex I, MT-ND1). Required to stabilize NDUFAF5. The polypeptide is NADH dehydrogenase [ubiquinone] 1 alpha subcomplex assembly factor 8 (Homo sapiens (Human)).